The chain runs to 874 residues: Leucine--tRNA ligase (874 aa).

Residues 47–57 (PYPSGKLHMGH) carry the 'HIGH' region motif. The 'KMSKS' region signature appears at 636–640 (KMSKS). Lys-639 contributes to the ATP binding site.

The protein belongs to the class-I aminoacyl-tRNA synthetase family.

Its subcellular location is the cytoplasm. The catalysed reaction is tRNA(Leu) + L-leucine + ATP = L-leucyl-tRNA(Leu) + AMP + diphosphate. The polypeptide is Leucine--tRNA ligase (Acinetobacter baumannii (strain SDF)).